A 262-amino-acid chain; its full sequence is MTLQARNLTLARGGAPILTDVSLTLAPGTLVGLLGANGAGKSTLLAALAGELAPRSGQVYLGDADLATLNARQLARRRAVLPQKPSLSFDLGVSDVVGMGAYPFPELDPAAVRQLVRDALEQASVTHLAQRRYPQLSGGEQQRVQFARVLAQCHAMHAPGQTRYLMLDEPISNLDPRHQMELLATARALAHEAGMGVLVIVHDINQAARWCDTLALLADGRLAALGPPADVLTPDHMRRVYGIEADVLAHPTLPGRLLVLAR.

The ABC transporter domain occupies 3–244; the sequence is LQARNLTLAR…DHMRRVYGIE (242 aa). 35 to 42 contacts ATP; the sequence is GANGAGKS.

Belongs to the ABC transporter superfamily. Heme (hemin) importer (TC 3.A.1.14.5) family. The complex is composed of two ATP-binding proteins (HmuV), two transmembrane proteins (HmuU) and a solute-binding protein (HmuT).

Its subcellular location is the cell inner membrane. Part of the ABC transporter complex HmuTUV involved in hemin import. Responsible for energy coupling to the transport system. The sequence is that of Hemin import ATP-binding protein HmuV from Bordetella parapertussis (strain 12822 / ATCC BAA-587 / NCTC 13253).